The primary structure comprises 131 residues: MPSFKSTTQLQNTQLRGAQAEDRALAHLRRQGLEPVVRNYRCKGGEIDLVMRAPDGTLVFVEVRQRSGRGFGGAAASVTPAKQRRVLLAAAHYLATLAQVPPCRFDVVALEPGRLDWLQHAFDQDAAGAGS.

This sequence belongs to the UPF0102 family.

This Cupriavidus necator (strain ATCC 17699 / DSM 428 / KCTC 22496 / NCIMB 10442 / H16 / Stanier 337) (Ralstonia eutropha) protein is UPF0102 protein H16_A3579.